A 739-amino-acid polypeptide reads, in one-letter code: Disintegrin and metalloproteinase domain-containing protein 18 (739 aa).

Residues 1 to 16 (MFLLLALLTELGRLQA) form the signal peptide. Positions 17–184 (HEGSEGIFLH…IKNLSKLLPQ (168 aa)) are excised as a propeptide. N-linked (GlcNAc...) asparagine glycosylation is found at Asn-36, Asn-76, Asn-122, Asn-149, Asn-156, Asn-177, and Asn-294. Residues 177-687 (NLSKLLPQYL…EKGYNTHWNN (511 aa)) are Extracellular-facing. One can recognise a Peptidase M12B domain in the interval 184-381 (QYLEIYIIVE…FETKCLQKLS (198 aa)). Disulfide bonds link Cys-293–Cys-376, Cys-335–Cys-360, Cys-337–Cys-342, and Cys-450–Cys-471. 5 N-linked (GlcNAc...) asparagine glycosylation sites follow: Asn-359, Asn-465, Asn-561, Asn-611, and Asn-625. Residues 390-479 (QPVCGNGILE…NCVPDTYALN (90 aa)) form the Disintegrin domain. Residues 620-654 (MGYNCNATTKCKGKGICNNFGNCQCFPGHRPPDCK) form the EGF-like domain. Cystine bridges form between Cys-624-Cys-636, Cys-630-Cys-642, and Cys-644-Cys-653. Residues 688–708 (WFILSFCIFLPFFIVFTTVIF) form a helical membrane-spanning segment. The Cytoplasmic portion of the chain corresponds to 709-739 (KRNEISKSCNRENAEYNRNSSVVSESDDVGH).

The prodomain and the metalloprotease-like domain are cleaved during the epididymal maturation of the spermatozoa. Expressed specifically in testis.

The protein localises to the membrane. Sperm surface membrane protein that may be involved in spermatogenesis and fertilization. This is a non catalytic metalloprotease-like protein. In Homo sapiens (Human), this protein is Disintegrin and metalloproteinase domain-containing protein 18 (ADAM18).